The following is a 284-amino-acid chain: NH(3)-dependent NAD(+) synthetase (284 aa).

Position 41-48 (41-48 (GLSGGVDS)) interacts with ATP. Mg(2+) is bound at residue Asp47. Arg127 contributes to the deamido-NAD(+) binding site. Thr147 serves as a coordination point for ATP. Glu152 contacts Mg(2+). A deamido-NAD(+)-binding site is contributed by Asp167. Residues Lys176 and Ser199 each contribute to the ATP site. Residues 264–284 (FKRRPAPGLDLPEPEDPAMSG) form a disordered region. Residues 275 to 284 (PEPEDPAMSG) are compositionally biased toward acidic residues.

Belongs to the NAD synthetase family. In terms of assembly, homodimer.

It carries out the reaction deamido-NAD(+) + NH4(+) + ATP = AMP + diphosphate + NAD(+) + H(+). It functions in the pathway cofactor biosynthesis; NAD(+) biosynthesis; NAD(+) from deamido-NAD(+) (ammonia route): step 1/1. Catalyzes the ATP-dependent amidation of deamido-NAD to form NAD. Uses ammonia as a nitrogen source. This Methanopyrus kandleri (strain AV19 / DSM 6324 / JCM 9639 / NBRC 100938) protein is NH(3)-dependent NAD(+) synthetase.